We begin with the raw amino-acid sequence, 155 residues long: Small ribosomal subunit protein uS7cz/uS7cy (155 aa).

Belongs to the universal ribosomal protein uS7 family. As to quaternary structure, part of the 30S ribosomal subunit.

It localises to the plastid. It is found in the chloroplast. Functionally, one of the primary rRNA binding proteins, it binds directly to 16S rRNA where it nucleates assembly of the head domain of the 30S subunit. This chain is Small ribosomal subunit protein uS7cz/uS7cy (rps7-A), found in Nandina domestica (Heavenly bamboo).